A 402-amino-acid chain; its full sequence is LIM/homeobox protein Lhx5 (402 aa).

LIM zinc-binding domains follow at residues 3 to 61 (VHCA…RRFG) and 62 to 125 (TKCA…SSSL). The span at 124-148 (SLKEGSLNSVSSCTDRSLSPDLQDP) shows a compositional bias: low complexity. Disordered regions lie at residues 124-186 (SLKE…PRTT) and 298-402 (HGPP…AAVW). Residues 151–167 (DDPKETDNSTSSDKETA) show a composition bias toward basic and acidic residues. The segment at residues 180 to 239 (RRGPRTTIKAKQLETLKAAFAATPKPTRHIREQLAQETGLNMRVIQVWFQNRRSKERRMK) is a DNA-binding region (homeobox). Low complexity-rich tracts occupy residues 300-311 (PPSQAQSPADSS) and 322-336 (PLGA…PHGA).

The protein localises to the nucleus. Its function is as follows. Plays an essential role in the regulation of neuronal differentiation and migration during development of the central nervous system. The polypeptide is LIM/homeobox protein Lhx5 (Lhx5) (Mus musculus (Mouse)).